Here is a 351-residue protein sequence, read N- to C-terminus: Transmembrane protein 184 homolog DDB_G0279555 (351 aa).

The chain crosses the membrane as a helical span at residues 1 to 21; sequence MWIVAGVCSGVAILLSFYLIY. An N-linked (GlcNAc...) asparagine glycan is attached at Asn26. 5 helical membrane-spanning segments follow: residues 39–59, 73–93, 127–147, 162–182, and 206–226; these read ILIM…FVEL, YVLY…FDLV, FVLQ…VLET, YVWL…FLVL, and ILFF…FGVI. Asn236 is a glycosylation site (N-linked (GlcNAc...) asparagine). The chain crosses the membrane as a helical span at residues 241 to 261; the sequence is LQDFITCVEMVILAICHHFFF. 2 N-linked (GlcNAc...) asparagine glycosylation sites follow: Asn301 and Asn304. Residues 327–351 are disordered; sequence HNHPTTKKKDEESNLLEPEDKDIII. Positions 339–351 are enriched in acidic residues; the sequence is SNLLEPEDKDIII.

The protein belongs to the TMEM184 family.

The protein resides in the cell membrane. In terms of biological role, probable transporter. The polypeptide is Transmembrane protein 184 homolog DDB_G0279555 (tmem184C) (Dictyostelium discoideum (Social amoeba)).